A 238-amino-acid chain; its full sequence is Sugar fermentation stimulation protein homolog (238 aa).

It belongs to the SfsA family.

In Vibrio parahaemolyticus serotype O3:K6 (strain RIMD 2210633), this protein is Sugar fermentation stimulation protein homolog.